Reading from the N-terminus, the 404-residue chain is Deoxyguanosinetriphosphate triphosphohydrolase-like protein (404 aa).

Residues 1 to 33 (MSVGMAAPRAAFSCDPDRSRGRQFAEPPSSNRS) form a disordered region. Residues 69–217 (RLTHSLEVAQ…AALADDIAYD (149 aa)) form the HD domain.

Belongs to the dGTPase family. Type 2 subfamily.

This chain is Deoxyguanosinetriphosphate triphosphohydrolase-like protein, found in Rhodopseudomonas palustris (strain HaA2).